We begin with the raw amino-acid sequence, 330 residues long: MSPATLQDDPSVDSFFNVVETETLALFEHLSFEFLEEFDVFAPAETGRTRDHEPPELMRGFLHCYYKDIYGIRPVERELRNTVVWLSCGFDRPPSRDAVDRFLTDLEHVVNKVFDHLVEQAALRGLLDLTYCIDSTDVRAMPADQDASKCYDPTDDEYYHGYGCTIVSTGQKIPIAAEFTESKQAPEETAMRVTRDALAVAKPIWMVGDSAYDTLDWHDHLLAAGVVPVAPYNARNTDDPKDIEYRVEDRIEQHSEDVQLKQSTLDETYNRRTGVERTNESVKDCGLGRTHARGRVHARAQVFLALCLRLVVAITNYERGDNPGSPIITV.

This sequence belongs to the transposase 11 family.

Its function is as follows. Involved in the transposition of the insertion sequence ISH11. The chain is Probable transposase for insertion sequence element ISH11 from Halobacterium salinarum (strain ATCC 29341 / DSM 671 / R1).